The primary structure comprises 308 residues: Glutaminase (308 aa).

Residues serine 66, asparagine 117, glutamate 161, asparagine 168, tyrosine 192, tyrosine 244, and valine 262 each coordinate substrate.

The protein belongs to the glutaminase family. Homotetramer.

The enzyme catalyses L-glutamine + H2O = L-glutamate + NH4(+). The polypeptide is Glutaminase (Salmonella heidelberg (strain SL476)).